Here is a 197-residue protein sequence, read N- to C-terminus: MMNRSAEVQRDTLETRVKVRLDLDGTGESRIRIGVPFMEHMLDQVARHGLIDLDIEADGDTHIDDHHTVEDVGITLGQALAQALGDKKGIRRYGHAYVPLDEALSRVVVDFSGRPGLQFHVDFVRARIGQFDVDLFQEFFQGLVNHAALTLHVDNLRGINAHHQAETVFKALGRALRMAAEADPRQADRIPSTKGAL.

It belongs to the imidazoleglycerol-phosphate dehydratase family.

The protein resides in the cytoplasm. It carries out the reaction D-erythro-1-(imidazol-4-yl)glycerol 3-phosphate = 3-(imidazol-4-yl)-2-oxopropyl phosphate + H2O. Its pathway is amino-acid biosynthesis; L-histidine biosynthesis; L-histidine from 5-phospho-alpha-D-ribose 1-diphosphate: step 6/9. This Alkalilimnicola ehrlichii (strain ATCC BAA-1101 / DSM 17681 / MLHE-1) protein is Imidazoleglycerol-phosphate dehydratase.